Here is a 617-residue protein sequence, read N- to C-terminus: Dopamine beta-hydroxylase (617 aa).

The Cytoplasmic segment spans residues 1–16 (MPALSRWASLPGPSMR). A helical; Signal-anchor for type II membrane protein transmembrane segment spans residues 17–37 (EAAFMYSTAVAIFLVILVAAL). Over 38–617 (QGSAPRESPL…TVVSIGGGKG (580 aa)) the chain is Intragranular. Residues 57 to 173 (GSLELSWNVS…GTVHLVYGIL (117 aa)) enclose the DOMON domain. N64 carries an N-linked (GlcNAc...) asparagine glycan. Intrachain disulfides connect C154/C596, C232/C283, C269/C295, C390/C503, C394/C565, and C466/C488. Residue N184 is glycosylated (N-linked (GlcNAc...) (complex) asparagine). Y230 is an active-site residue. Cu(2+) is bound by residues H262 and H263. H333 provides a ligand contact to Cu(2+). N-linked (GlcNAc...) asparagine glycosylation is present at N344. H412 is a catalytic residue. Positions 412, 414, and 487 each coordinate Cu(2+). An N-linked (GlcNAc...) asparagine glycan is attached at N566. Positions 590-617 (EEPTPQCPTSQGRSPAGPTVVSIGGGKG) are disordered.

This sequence belongs to the copper type II ascorbate-dependent monooxygenase family. In terms of assembly, homotetramer; composed of two disulfide-linked dimers. Cu(2+) is required as a cofactor. N-glycosylated. Post-translationally, proteolytic cleavage after the membrane-anchor leads to the release of the soluble form.

The protein localises to the cytoplasmic vesicle. It is found in the secretory vesicle lumen. It localises to the secretory vesicle. The protein resides in the chromaffin granule lumen. Its subcellular location is the secreted. The protein localises to the secretory vesicle membrane. It is found in the chromaffin granule membrane. The enzyme catalyses dopamine + 2 L-ascorbate + O2 = (R)-noradrenaline + 2 monodehydro-L-ascorbate radical + H2O. Its pathway is catecholamine biosynthesis; (R)-noradrenaline biosynthesis; (R)-noradrenaline from dopamine: step 1/1. In terms of biological role, catalyzes the hydroxylation of dopamine to noradrenaline (also known as norepinephrine), and is thus vital for regulation of these neurotransmitters. The chain is Dopamine beta-hydroxylase (DBH) from Homo sapiens (Human).